Here is a 179-residue protein sequence, read N- to C-terminus: Large ribosomal subunit protein uL5 (179 aa).

The protein belongs to the universal ribosomal protein uL5 family. In terms of assembly, part of the 50S ribosomal subunit; part of the 5S rRNA/L5/L18/L25 subcomplex. Contacts the 5S rRNA and the P site tRNA. Forms a bridge to the 30S subunit in the 70S ribosome.

In terms of biological role, this is one of the proteins that bind and probably mediate the attachment of the 5S RNA into the large ribosomal subunit, where it forms part of the central protuberance. In the 70S ribosome it contacts protein S13 of the 30S subunit (bridge B1b), connecting the 2 subunits; this bridge is implicated in subunit movement. Contacts the P site tRNA; the 5S rRNA and some of its associated proteins might help stabilize positioning of ribosome-bound tRNAs. This chain is Large ribosomal subunit protein uL5, found in Shewanella denitrificans (strain OS217 / ATCC BAA-1090 / DSM 15013).